Here is a 257-residue protein sequence, read N- to C-terminus: PHD finger protein Alfin1 (257 aa).

Residues 145–200 (SKDQLTAHNNGSNSKYKSSGKSRQSESQTKGVKMSAPVKEEVDSGEEEEEDDDEQG) form a disordered region. Residues 153 to 166 (NNGSNSKYKSSGKS) show a composition bias toward low complexity. The segment covering 187-199 (DSGEEEEEDDDEQ) has biased composition (acidic residues). The PHD-type zinc finger occupies 200-252 (GATCGACGDNYGTDEFWICCDMCEKWFHGKCVKITPAKAEHIKQYKCPGCSIK).

It belongs to the Alfin family. In terms of assembly, interacts with H3K4me3 and to a lesser extent with H3K4me2. Predominantly expressed in the roots.

It is found in the nucleus. In terms of biological role, histone-binding component that specifically recognizes H3 tails trimethylated on 'Lys-4' (H3K4me3), which mark transcription start sites of virtually all active genes. Transcriptional regulator that binds specifically to DNA sequences 5'-GNGGTG-3' or 5'-GTGGNG-3', including promoter elements of the salt-inducible PRP2 gene. Plays a role in salinity tolerance. The chain is PHD finger protein Alfin1 (ALFIN-1) from Medicago sativa (Alfalfa).